We begin with the raw amino-acid sequence, 371 residues long: tRNA-specific 2-thiouridylase MnmA (371 aa).

ATP is bound by residues 13 to 20 and Met39; that span reads GMSGGVDS. An interaction with target base in tRNA region spans residues 99-101; the sequence is NPD. Cys104 (nucleophile) is an active-site residue. Residues Cys104 and Cys200 are joined by a disulfide bond. Gly128 lines the ATP pocket. Residues 150–152 form an interaction with tRNA region; sequence KDQ. Residue Cys200 is the Cysteine persulfide intermediate of the active site. The segment at 308–309 is interaction with tRNA; sequence RY.

The protein belongs to the MnmA/TRMU family.

It is found in the cytoplasm. The enzyme catalyses S-sulfanyl-L-cysteinyl-[protein] + uridine(34) in tRNA + AH2 + ATP = 2-thiouridine(34) in tRNA + L-cysteinyl-[protein] + A + AMP + diphosphate + H(+). In terms of biological role, catalyzes the 2-thiolation of uridine at the wobble position (U34) of tRNA, leading to the formation of s(2)U34. The protein is tRNA-specific 2-thiouridylase MnmA of Listeria monocytogenes serovar 1/2a (strain ATCC BAA-679 / EGD-e).